Consider the following 266-residue polypeptide: 2-C-methyl-D-erythritol 4-phosphate cytidylyltransferase (266 aa).

Positions 234–251 (ADDARSAEARSAEARSEE) are enriched in basic and acidic residues. Residues 234–266 (ADDARSAEARSAEARSEEPQFAGARSTDARSGG) are disordered.

The protein belongs to the IspD/TarI cytidylyltransferase family. IspD subfamily.

It catalyses the reaction 2-C-methyl-D-erythritol 4-phosphate + CTP + H(+) = 4-CDP-2-C-methyl-D-erythritol + diphosphate. It participates in isoprenoid biosynthesis; isopentenyl diphosphate biosynthesis via DXP pathway; isopentenyl diphosphate from 1-deoxy-D-xylulose 5-phosphate: step 2/6. Catalyzes the formation of 4-diphosphocytidyl-2-C-methyl-D-erythritol from CTP and 2-C-methyl-D-erythritol 4-phosphate (MEP). The protein is 2-C-methyl-D-erythritol 4-phosphate cytidylyltransferase of Frankia casuarinae (strain DSM 45818 / CECT 9043 / HFP020203 / CcI3).